Here is a 575-residue protein sequence, read N- to C-terminus: V-type ATP synthase alpha chain (575 aa).

Residue 238 to 245 (GPFGAGKT) coordinates ATP.

Belongs to the ATPase alpha/beta chains family.

It catalyses the reaction ATP + H2O + 4 H(+)(in) = ADP + phosphate + 5 H(+)(out). In terms of biological role, produces ATP from ADP in the presence of a proton gradient across the membrane. The V-type alpha chain is a catalytic subunit. This chain is V-type ATP synthase alpha chain, found in Borreliella afzelii (strain PKo) (Borrelia afzelii).